Reading from the N-terminus, the 107-residue chain is High mobility group protein HMG-I/HMG-Y (107 aa).

A disordered region spans residues 1–107 (MSESSSKSSQ…ISQESSEEEQ (107 aa)). S2 carries the N-acetylserine modification. K7 is subject to N6-acetyllysine. S8 is modified (ADP-ribosylserine). S9 is modified (ADP-ribosylserine; alternate). A Phosphoserine; alternate modification is found at S9. The residue at position 15 (K15) is an N6-acetyllysine; alternate. K15 participates in a covalent cross-link: Glycyl lysine isopeptide (Lys-Gly) (interchain with G-Cter in SUMO2); alternate. Basic and acidic residues predominate over residues 15-24 (KQEKDGTEKR). A DNA-binding region (a.T hook 1) is located at residues 21 to 31 (TEKRGRGRPRK). R26 is subject to Asymmetric dimethylarginine; alternate. Omega-N-methylarginine; alternate is present on R26. The residue at position 26 (R26) is a Symmetric dimethylarginine; alternate. S36 carries the post-translational modification Phosphoserine; by HIPK2 and CDC2. T39 carries the phosphothreonine modification. 2 positions are modified to phosphoserine: S44 and S49. T53 carries the phosphothreonine; by HIPK2 and CDC2 modification. 2 consecutive DNA-binding regions (a.T hook) follow at residues 53–63 (TPKRPRGRPKG) and 78–89 (APGRKPRGRPKK). An interaction with HIPK2 region spans residues 53–77 (TPKRPRGRPKGSKNKGAAKTRKATT). Over residues 55 to 74 (KRPRGRPKGSKNKGAAKTRK) the composition is skewed to basic residues. Residues R58 and R60 each carry the asymmetric dimethylarginine; by PRMT6; alternate modification. R58 and R60 each carry omega-N-methylarginine; by PRMT6; alternate. Residues 93 to 107 (EEEEGISQESSEEEQ) are compositionally biased toward acidic residues. A phosphoserine mark is found at S99, S102, and S103.

It belongs to the HMGA family. Interacts with HIPK2. In terms of processing, isoforms HMG-I and HMG-Y can be phosphorylated by HIPK2. Phosphorylation may modulate DNA-binding affinity. Methylation at Arg-58 is mutually exclusive with methylation at Arg-60.

It localises to the nucleus. Its subcellular location is the chromosome. Functionally, HMG-I/Y bind preferentially to the minor groove of A+T rich regions in double-stranded DNA. It is suggested that these proteins could function in nucleosome phasing and in the 3'-end processing of mRNA transcripts. They are also involved in the transcription regulation of genes containing, or in close proximity to A+T-rich regions. The chain is High mobility group protein HMG-I/HMG-Y (HMGA1) from Cricetulus griseus (Chinese hamster).